The following is a 314-amino-acid chain: Deacetoxycephalosporin C synthase (314 aa).

The region spanning 156–269 (DCEPLLRLRY…RTSSVFFLRP (114 aa)) is the Fe2OG dioxygenase domain.

The protein belongs to the iron/ascorbate-dependent oxidoreductase family. Fe cation serves as cofactor. The cofactor is L-ascorbate.

It carries out the reaction penicillin N + 2-oxoglutarate + O2 = deacetoxycephalosporin C + succinate + CO2 + H2O. It participates in antibiotic biosynthesis; cephalosporin C biosynthesis. Functionally, catalyzes the step from penicillin N to deacetoxy-cephalosporin C. In Amycolatopsis lactamdurans (Nocardia lactamdurans), this protein is Deacetoxycephalosporin C synthase (cefE).